Reading from the N-terminus, the 165-residue chain is UPF0303 protein Bamb_1459 (165 aa).

It belongs to the UPF0303 family.

This Burkholderia ambifaria (strain ATCC BAA-244 / DSM 16087 / CCUG 44356 / LMG 19182 / AMMD) (Burkholderia cepacia (strain AMMD)) protein is UPF0303 protein Bamb_1459.